A 165-amino-acid polypeptide reads, in one-letter code: Deoxyuridine 5'-triphosphate nucleotidohydrolase (165 aa).

Belongs to the dUTPase family. In terms of assembly, homotrimer. Requires Mg(2+) as cofactor.

Its subcellular location is the host cytoplasm. It is found in the virion. The catalysed reaction is dUTP + H2O = dUMP + diphosphate + H(+). Its function is as follows. The viral dUTPase may play a role in lowering the dUTP concentration in natural infections to minimize misincorporation of deoxyuridine into the viral DNA and ensure the fidelity of genome replication. In African swine fever virus (isolate Tick/South Africa/Pretoriuskop Pr4/1996) (ASFV), this protein is Deoxyuridine 5'-triphosphate nucleotidohydrolase.